A 150-amino-acid polypeptide reads, in one-letter code: Small ribosomal subunit protein uS11 (150 aa).

Positions 126 to 150 are disordered; it reads GRIEDVTPTPSDSTRRKGGRRGRRL. Positions 141–150 are enriched in basic residues; the sequence is RKGGRRGRRL.

This sequence belongs to the universal ribosomal protein uS11 family. Component of the small ribosomal subunit (SSU). Mature N.crassa ribosomes consist of a small (40S) and a large (60S) subunit. The 40S small subunit contains 1 molecule of ribosomal RNA (18S rRNA) and at least 32 different proteins. The large 60S subunit contains 3 rRNA molecules (26S, 5.8S and 5S rRNA) and at least 42 different proteins.

It is found in the cytoplasm. In terms of biological role, component of the ribosome, a large ribonucleoprotein complex responsible for the synthesis of proteins in the cell. The small ribosomal subunit (SSU) binds messenger RNAs (mRNAs) and translates the encoded message by selecting cognate aminoacyl-transfer RNA (tRNA) molecules. The large subunit (LSU) contains the ribosomal catalytic site termed the peptidyl transferase center (PTC), which catalyzes the formation of peptide bonds, thereby polymerizing the amino acids delivered by tRNAs into a polypeptide chain. The nascent polypeptides leave the ribosome through a tunnel in the LSU and interact with protein factors that function in enzymatic processing, targeting, and the membrane insertion of nascent chains at the exit of the ribosomal tunnel. uS11 is involved in nucleolar processing of pre-18S ribosomal RNA and ribosome assembly. This Neurospora crassa (strain ATCC 24698 / 74-OR23-1A / CBS 708.71 / DSM 1257 / FGSC 987) protein is Small ribosomal subunit protein uS11 (rps-14).